We begin with the raw amino-acid sequence, 758 residues long: MTILNHTLGFPRVGLKRELKKAQESYWAGNSTQEELLNVGRELRARHWQQQQQAGVDLVPVGDFAWYDHVLTTSLLLGNVPERHQNADGSIDIDTLFRIGRGRAPTGKPAAAAEMTKWFNTNYHYMVPEFQQGQQFKLGWTQLLDEVDEALALGHKIKPVLLGPITYLWLGKVKGEQFDRLSLLNDILPVYQQVLAELAKRGIEWVQIDEPALVLELPQEWLDAYQPAYQALQGQVKLLLTTYFDSIGHNIDTIRALPVQGLHVDVVAGHDDLAVLHKNLPKEWLLSLGVINGRNVWRADLSSWFERLQPLVNSRPLWLGSSCSLLHSPIDLNEETRLDAEVKSWFAFALQKCAELALLTQALNAPNDAKLAELAAYSAPIRARRSSSRVHNAQVEQRLAAITSQDIERQLPYEARAETQRKRFNLPAWPTTTIGSFPQTTEIRGLRLDFKQGRLDGKNYRTGISEHIKQAIAEQERLGLDVLVHGEAERNDMVEYFGEHLDGFVFTQNGWVQSYGSRCVKPPVIIGDISRPEAITVEWAKYAQSLTEKPVKGMLTGPVTILCWSFPREDVSRETIAKQIALALRDEVEDLEKAGIGIIQIDEPALREGLPLRRADWQAYLQWAVDAFKLNAAVAQNDTQIHTHMCYCEFNDIMDSIAALDADVITIETSRSDMELLESFEDFAYPNEIGPGVYDIHSPNVPSVEWIEALLRKAAQRIPAERLWVNPDCGLKTRGWPETRQALANMVLAAQRLREEQI.

5-methyltetrahydropteroyltri-L-glutamate is bound by residues 17–20 (RELK) and K117. Residues 434 to 436 (IGS) and E487 each bind L-homocysteine. L-methionine contacts are provided by residues 434–436 (IGS) and E487. Residues 518-519 (RC) and W564 contribute to the 5-methyltetrahydropteroyltri-L-glutamate site. D602 lines the L-homocysteine pocket. D602 provides a ligand contact to L-methionine. A 5-methyltetrahydropteroyltri-L-glutamate-binding site is contributed by E608. Residues H644, C646, and E668 each coordinate Zn(2+). H697 functions as the Proton donor in the catalytic mechanism. C729 lines the Zn(2+) pocket.

The protein belongs to the vitamin-B12 independent methionine synthase family. Zn(2+) serves as cofactor.

It catalyses the reaction 5-methyltetrahydropteroyltri-L-glutamate + L-homocysteine = tetrahydropteroyltri-L-glutamate + L-methionine. The protein operates within amino-acid biosynthesis; L-methionine biosynthesis via de novo pathway; L-methionine from L-homocysteine (MetE route): step 1/1. Its function is as follows. Catalyzes the transfer of a methyl group from 5-methyltetrahydrofolate to homocysteine resulting in methionine formation. The sequence is that of 5-methyltetrahydropteroyltriglutamate--homocysteine methyltransferase from Yersinia pseudotuberculosis serotype O:1b (strain IP 31758).